The primary structure comprises 532 residues: Glucose-6-phosphate isomerase (532 aa).

Glutamate 330 (proton donor) is an active-site residue. Residues histidine 359 and lysine 461 contribute to the active site.

It belongs to the GPI family.

The protein resides in the cytoplasm. It carries out the reaction alpha-D-glucose 6-phosphate = beta-D-fructose 6-phosphate. The protein operates within carbohydrate biosynthesis; gluconeogenesis. It functions in the pathway carbohydrate degradation; glycolysis; D-glyceraldehyde 3-phosphate and glycerone phosphate from D-glucose: step 2/4. Functionally, catalyzes the reversible isomerization of glucose-6-phosphate to fructose-6-phosphate. The chain is Glucose-6-phosphate isomerase from Synechococcus sp. (strain CC9902).